The sequence spans 339 residues: Glycerol-3-phosphate dehydrogenase [NAD(P)+] (339 aa).

NADPH is bound by residues Ser-14, Tyr-15, His-35, and Lys-109. 3 residues coordinate sn-glycerol 3-phosphate: Lys-109, Gly-138, and Thr-140. Ala-142 lines the NADPH pocket. The sn-glycerol 3-phosphate site is built by Lys-194, Asp-247, Ser-257, Arg-258, and Asn-259. Lys-194 serves as the catalytic Proton acceptor. NADPH is bound at residue Arg-258. Positions 282 and 284 each coordinate NADPH.

The protein belongs to the NAD-dependent glycerol-3-phosphate dehydrogenase family.

The protein localises to the cytoplasm. It catalyses the reaction sn-glycerol 3-phosphate + NAD(+) = dihydroxyacetone phosphate + NADH + H(+). The catalysed reaction is sn-glycerol 3-phosphate + NADP(+) = dihydroxyacetone phosphate + NADPH + H(+). It functions in the pathway membrane lipid metabolism; glycerophospholipid metabolism. Its function is as follows. Catalyzes the reduction of the glycolytic intermediate dihydroxyacetone phosphate (DHAP) to sn-glycerol 3-phosphate (G3P), the key precursor for phospholipid synthesis. This Shewanella amazonensis (strain ATCC BAA-1098 / SB2B) protein is Glycerol-3-phosphate dehydrogenase [NAD(P)+].